We begin with the raw amino-acid sequence, 333 residues long: tRNA N6-adenosine threonylcarbamoyltransferase (333 aa).

Fe cation-binding residues include histidine 111 and histidine 115. Substrate is bound by residues 134–138, aspartate 167, glycine 180, and asparagine 272; that span reads LVSGG. Residue aspartate 300 participates in Fe cation binding.

It belongs to the KAE1 / TsaD family. Requires Fe(2+) as cofactor.

It is found in the cytoplasm. The enzyme catalyses L-threonylcarbamoyladenylate + adenosine(37) in tRNA = N(6)-L-threonylcarbamoyladenosine(37) in tRNA + AMP + H(+). Required for the formation of a threonylcarbamoyl group on adenosine at position 37 (t(6)A37) in tRNAs that read codons beginning with adenine. Is involved in the transfer of the threonylcarbamoyl moiety of threonylcarbamoyl-AMP (TC-AMP) to the N6 group of A37, together with TsaE and TsaB. TsaD likely plays a direct catalytic role in this reaction. This chain is tRNA N6-adenosine threonylcarbamoyltransferase, found in Legionella pneumophila (strain Corby).